Consider the following 526-residue polypeptide: Bifunctional purine biosynthesis protein PurH (526 aa).

An MGS-like domain is found at 1-147 (MPSIKRALIS…KNWKHVAIVT (147 aa)).

Belongs to the PurH family.

The enzyme catalyses (6R)-10-formyltetrahydrofolate + 5-amino-1-(5-phospho-beta-D-ribosyl)imidazole-4-carboxamide = 5-formamido-1-(5-phospho-D-ribosyl)imidazole-4-carboxamide + (6S)-5,6,7,8-tetrahydrofolate. The catalysed reaction is IMP + H2O = 5-formamido-1-(5-phospho-D-ribosyl)imidazole-4-carboxamide. It functions in the pathway purine metabolism; IMP biosynthesis via de novo pathway; 5-formamido-1-(5-phospho-D-ribosyl)imidazole-4-carboxamide from 5-amino-1-(5-phospho-D-ribosyl)imidazole-4-carboxamide (10-formyl THF route): step 1/1. The protein operates within purine metabolism; IMP biosynthesis via de novo pathway; IMP from 5-formamido-1-(5-phospho-D-ribosyl)imidazole-4-carboxamide: step 1/1. In Neisseria meningitidis serogroup C / serotype 2a (strain ATCC 700532 / DSM 15464 / FAM18), this protein is Bifunctional purine biosynthesis protein PurH.